The following is a 257-amino-acid chain: Putative hydro-lyase BceJ2315_40370 (257 aa).

The protein belongs to the D-glutamate cyclase family.

This chain is Putative hydro-lyase BceJ2315_40370, found in Burkholderia cenocepacia (strain ATCC BAA-245 / DSM 16553 / LMG 16656 / NCTC 13227 / J2315 / CF5610) (Burkholderia cepacia (strain J2315)).